An 859-amino-acid chain; its full sequence is Bifunctional levopimaradiene synthase, chloroplastic (859 aa).

Residues 1–70 constitute a chloroplast transit peptide; the sequence is MALLSSSLSS…IACVGEDSLS (70 aa). Substrate is bound at residue lysine 259. Aspartate 392 and aspartate 394 together coordinate Mg(2+). The DXDD motif motif lies at 392-395; sequence DIDD. Position 479 (lysine 479) interacts with substrate. Positions 611, 615, 755, 759, and 763 each coordinate Mg(2+). Residues 611 to 615 carry the DDXXD motif motif; it reads DDLYD.

Belongs to the terpene synthase family. Tpsd subfamily. The cofactor is Mg(2+).

The protein resides in the plastid. It localises to the chloroplast. The enzyme catalyses (2E,6E,10E)-geranylgeranyl diphosphate = (+)-copalyl diphosphate. The catalysed reaction is (+)-copalyl diphosphate = abieta-8(14),12-diene + diphosphate. The protein operates within terpene metabolism; oleoresin biosynthesis. In terms of biological role, involved in defensive oleoresin formation in conifers in response to insect attack or other injury. Involved in diterpene (C20) olefins biosynthesis. Bifunctional enzyme that catalyzes two sequential cyclizations of geranylgeranyl diphosphate (GGPP) to levopimaradiene. Levopimaradiene is the major products of the enzyme followed by abietadiene, neoabietadiene and palustradiene. The chain is Bifunctional levopimaradiene synthase, chloroplastic (TPS-LAS) from Picea abies (Norway spruce).